A 139-amino-acid chain; its full sequence is uncharacterized protein (139 aa).

Residues 43–59 (FGVISTLIAIFIGAFWL) traverse the membrane as a helical segment.

The protein resides in the membrane. This is an uncharacterized protein from Haemophilus influenzae (strain ATCC 51907 / DSM 11121 / KW20 / Rd).